Reading from the N-terminus, the 65-residue chain is Alpha-toxin Bs-Tx28 (65 aa).

The LCN-type CS-alpha/beta domain maps to 3-65 (RDAYIADDKN…VPIRIPGKCR (63 aa)). 4 disulfides stabilise this stretch: cysteine 13/cysteine 64, cysteine 17/cysteine 37, cysteine 23/cysteine 47, and cysteine 27/cysteine 49. Arginine 65 carries the post-translational modification Arginine amide.

The protein belongs to the long (4 C-C) scorpion toxin superfamily. Sodium channel inhibitor family. Alpha subfamily. As to expression, expressed by the venom gland.

The protein resides in the secreted. Alpha toxins bind voltage-independently at site-3 of sodium channels (Nav) and inhibit the inactivation of the activated channels, thereby blocking neuronal transmission. This toxin inhibits the inactivation of activated TTX-sensitive sodium channels (Nav). This chain is Alpha-toxin Bs-Tx28, found in Hottentotta tamulus sindicus (Scorpion).